We begin with the raw amino-acid sequence, 315 residues long: Rhomboid-related protein 4 (315 aa).

The Cytoplasmic portion of the chain corresponds to 1-21 (MQRRTRGINTGLLLLLSQVFQ). A helical membrane pass occupies residues 22 to 42 (IGINNIPPVTLATLAVNVWFF). The Lumenal portion of the chain corresponds to 43-103 (LNPWKPLYHS…KLERRLGSRW (61 aa)). The helical transmembrane segment at 104–124 (FAYVIATFSLLTGVVYLLLQF) threads the bilayer. Residues 125-137 (TVAELLNQPDFKR) lie on the Cytoplasmic side of the membrane. Residues 138-154 (NCAVGFSGVLFALKVLS) traverse the membrane as a helical segment. The active-site Nucleophile is the Ser-144. The Lumenal portion of the chain corresponds to 155–180 (NHYCPGGFVNILGFPVPNRFACWAEL). A helical transmembrane segment spans residues 181-201 (VAIHFCTPGTSFAGHLAGILV). His-195 is a catalytic residue. Residues 202-315 (GLMYTQGPLK…RQRLHRFDGQ (114 aa)) lie on the Cytoplasmic side of the membrane. Positions 269-284 (SEEEQLERALRASIWD) are ubiquitin-binding domain (UBD). The VCP/p97-interacting motif (VIM) stretch occupies residues 301-315 (PEEMRRQRLHRFDGQ).

This sequence belongs to the peptidase S54 family. As to quaternary structure, interacts with BIK and STEAP3. Interacts (via C-terminal domain) with VCP/P97. Interacts with ubiquitin and ubiquitinated proteins. In terms of tissue distribution, expressed in testis (at protein level). Expressed in intestine, lung, brain, kidney, epididymis, stomach, muscle, spleen, liver, heart and testis.

Its subcellular location is the endoplasmic reticulum membrane. The protein localises to the mitochondrion membrane. The enzyme catalyses Cleaves type-1 transmembrane domains using a catalytic dyad composed of serine and histidine that are contributed by different transmembrane domains.. Its activity is regulated as follows. Inhibited by aprotinin. Functionally, intramembrane-cleaving serine protease that cleaves single transmembrane or multi-pass membrane proteins in the hydrophobic plane of the membrane, luminal loops and juxtamembrane regions. Involved in regulated intramembrane proteolysis and the subsequent release of functional polypeptides from their membrane anchors. Functional component of endoplasmic reticulum-associated degradation (ERAD) for misfolded membrane proteins. Required for the degradation process of some specific misfolded endoplasmic reticulum (ER) luminal proteins. Participates in the transfer of misfolded proteins from the ER to the cytosol, where they are destroyed by the proteasome in a ubiquitin-dependent manner. Functions in BIK, MPZ, PKD1, PTCRA, RHO, STEAP3 and TRAC processing. Involved in the regulation of exosomal secretion; inhibits the TSAP6-mediated secretion pathway. Involved in the regulation of apoptosis; modulates BIK-mediated apoptotic activity. Also plays a role in the regulation of spermatogenesis; inhibits apoptotic activity in spermatogonia. The polypeptide is Rhomboid-related protein 4 (Rhbdd1) (Mus musculus (Mouse)).